A 950-amino-acid polypeptide reads, in one-letter code: Protocadherin alpha-3 (950 aa).

Positions 1 to 29 (MLFSWREDPGAQCLLLSLLLLAASEVGSG) are cleaved as a signal peptide. Cadherin domains follow at residues 30–133 (QLHY…APVF), 134–242 (PMSV…APAF), 243–350 (ERTI…VPEL), 351–455 (VIHS…APAF), 456–565 (SQSE…APAL), and 581–678 (VPRS…APKA). Topologically, residues 30 to 697 (QLHYSVSEEA…GPEAALVDVN (668 aa)) are extracellular. N-linked (GlcNAc...) asparagine glycosylation is found at Asn257 and Asn265. An N-linked (GlcNAc...) asparagine glycan is attached at Asn548. The chain crosses the membrane as a helical span at residues 698–718 (VYLIVAICAVSSLLVLTLLLY). Residues 719-950 (TALRCSAPPT…GNSTTDNSDQ (232 aa)) are Cytoplasmic-facing. PXXP repeat units follow at residues 734-737 (PGKP) and 774-777 (PSLP). The interval 734–894 (PGKPTLVCSS…PDKFIIPGSP (161 aa)) is 6 X 4 AA repeats of P-X-X-P. Disordered stretches follow at residues 777 to 806 (PPCPISRDREEKQDVDVDLSAKPRQPNPDW), 831 to 856 (GPGGPDQQWPTVSSATPEPEAGEVSP), and 869 to 889 (FKYGPGNPKQSGPGELPDKFI). Over residues 782 to 797 (SRDREEKQDVDVDLSA) the composition is skewed to basic and acidic residues. PXXP repeat units follow at residues 799 to 802 (PRQP), 832 to 835 (PGGP), 873 to 876 (PGNP), and 891 to 894 (PGSP). Residues 901–950 (QEPANSQIDKSDFITFGKKEETKKKKKKKKGNKTQEKKEKGNSTTDNSDQ) are disordered. Over residues 909 to 923 (DKSDFITFGKKEETK) the composition is skewed to basic and acidic residues.

It localises to the cell membrane. Functionally, potential calcium-dependent cell-adhesion protein. May be involved in the establishment and maintenance of specific neuronal connections in the brain. This chain is Protocadherin alpha-3 (PCDHA3), found in Pan troglodytes (Chimpanzee).